Consider the following 428-residue polypeptide: Elongation factor 1-alpha (428 aa).

In terms of domain architecture, tr-type G spans 5-215 (KPHINIVFIG…ALDQMPEPPK (211 aa)). Positions 14–21 (GHVDHGKS) are G1. 14–21 (GHVDHGKS) is a binding site for GTP. Residue Ser21 participates in Mg(2+) binding. The tract at residues 68–72 (GITID) is G2. Residues 89–92 (DAPG) form a G3 region. Residues 89 to 93 (DAPGH) and 144 to 147 (NKMD) contribute to the GTP site. The interval 144–147 (NKMD) is G4. The interval 181 to 183 (SAW) is G5.

The protein belongs to the TRAFAC class translation factor GTPase superfamily. Classic translation factor GTPase family. EF-Tu/EF-1A subfamily.

Its subcellular location is the cytoplasm. The enzyme catalyses GTP + H2O = GDP + phosphate + H(+). Its function is as follows. GTP hydrolase that promotes the GTP-dependent binding of aminoacyl-tRNA to the A-site of ribosomes during protein biosynthesis. The polypeptide is Elongation factor 1-alpha (Thermococcus celer).